The chain runs to 158 residues: NAD(P)H-quinone oxidoreductase subunit J, chloroplastic (158 aa).

Belongs to the complex I 30 kDa subunit family. In terms of assembly, NDH is composed of at least 16 different subunits, 5 of which are encoded in the nucleus.

The protein resides in the plastid. It is found in the chloroplast thylakoid membrane. The catalysed reaction is a plastoquinone + NADH + (n+1) H(+)(in) = a plastoquinol + NAD(+) + n H(+)(out). It carries out the reaction a plastoquinone + NADPH + (n+1) H(+)(in) = a plastoquinol + NADP(+) + n H(+)(out). Functionally, NDH shuttles electrons from NAD(P)H:plastoquinone, via FMN and iron-sulfur (Fe-S) centers, to quinones in the photosynthetic chain and possibly in a chloroplast respiratory chain. The immediate electron acceptor for the enzyme in this species is believed to be plastoquinone. Couples the redox reaction to proton translocation, and thus conserves the redox energy in a proton gradient. The sequence is that of NAD(P)H-quinone oxidoreductase subunit J, chloroplastic from Amborella trichopoda.